Consider the following 126-residue polypeptide: Plastocyanin (126 aa).

The N-terminal stretch at 1–28 (MSKKFLTILAGLLLVVSSFFLSVSPAAA) is a signal peptide. Residues 29–126 (ANATVKMGSD…AGMVGKVVVE (98 aa)) form the Plastocyanin-like domain. Cu cation contacts are provided by H67, C111, H114, and M119.

This sequence belongs to the plastocyanin family. It depends on Cu(2+) as a cofactor.

It is found in the cellular thylakoid membrane. Participates in electron transfer between P700 and the cytochrome b6-f complex in photosystem I. The protein is Plastocyanin (petE) of Synechocystis sp. (strain ATCC 27184 / PCC 6803 / Kazusa).